The sequence spans 207 residues: Large ribosomal subunit protein uL4 (207 aa).

A disordered region spans residues 49–78; it reads HAVKNRSAVSGGGRKPWRQKGTGRARQGSI.

The protein belongs to the universal ribosomal protein uL4 family. As to quaternary structure, part of the 50S ribosomal subunit.

Its function is as follows. One of the primary rRNA binding proteins, this protein initially binds near the 5'-end of the 23S rRNA. It is important during the early stages of 50S assembly. It makes multiple contacts with different domains of the 23S rRNA in the assembled 50S subunit and ribosome. Forms part of the polypeptide exit tunnel. The protein is Large ribosomal subunit protein uL4 of Streptococcus agalactiae serotype Ia (strain ATCC 27591 / A909 / CDC SS700).